We begin with the raw amino-acid sequence, 242 residues long: Uridylate kinase (242 aa).

Position 17 to 20 (lysine 17 to glycine 20) interacts with ATP. Position 59 (glycine 59) interacts with UMP. 2 residues coordinate ATP: glycine 60 and arginine 64. Residues aspartate 79 and threonine 140–threonine 147 contribute to the UMP site. ATP is bound by residues threonine 167, tyrosine 173, and aspartate 176.

It belongs to the UMP kinase family. In terms of assembly, homohexamer.

The protein resides in the cytoplasm. It carries out the reaction UMP + ATP = UDP + ADP. It functions in the pathway pyrimidine metabolism; CTP biosynthesis via de novo pathway; UDP from UMP (UMPK route): step 1/1. Its activity is regulated as follows. Inhibited by UTP. Catalyzes the reversible phosphorylation of UMP to UDP. The sequence is that of Uridylate kinase from Marinobacter nauticus (strain ATCC 700491 / DSM 11845 / VT8) (Marinobacter aquaeolei).